We begin with the raw amino-acid sequence, 498 residues long: Glycerol kinase (498 aa).

ADP is bound at residue threonine 12. Residues threonine 12, threonine 13, and serine 14 each coordinate ATP. Sn-glycerol 3-phosphate is bound at residue threonine 12. Arginine 16 lines the ADP pocket. Positions 82, 83, 134, and 244 each coordinate sn-glycerol 3-phosphate. Arginine 82, glutamate 83, tyrosine 134, aspartate 244, and glutamine 245 together coordinate glycerol. Residues threonine 266 and glycine 310 each coordinate ADP. Threonine 266, glycine 310, glutamine 314, and glycine 411 together coordinate ATP. Glycine 411 and asparagine 415 together coordinate ADP.

This sequence belongs to the FGGY kinase family.

It catalyses the reaction glycerol + ATP = sn-glycerol 3-phosphate + ADP + H(+). The protein operates within polyol metabolism; glycerol degradation via glycerol kinase pathway; sn-glycerol 3-phosphate from glycerol: step 1/1. Its activity is regulated as follows. Inhibited by fructose 1,6-bisphosphate (FBP). Functionally, key enzyme in the regulation of glycerol uptake and metabolism. Catalyzes the phosphorylation of glycerol to yield sn-glycerol 3-phosphate. The sequence is that of Glycerol kinase from Roseiflexus sp. (strain RS-1).